A 221-amino-acid chain; its full sequence is Small ribosomal subunit protein eS8 (221 aa).

2 disordered regions span residues 1–41 (MGIS…LSSN) and 128–169 (TPAA…TLDP). Over residues 8-26 (MHKRRATGGKQKAWRKKRK) the composition is skewed to basic residues. Positions 146–169 (EETKKSNHVTRKLEKRKEGRTLDP) are enriched in basic and acidic residues.

This sequence belongs to the eukaryotic ribosomal protein eS8 family.

The polypeptide is Small ribosomal subunit protein eS8 (RPS8) (Zea mays (Maize)).